The sequence spans 160 residues: SsrA-binding protein (160 aa).

This sequence belongs to the SmpB family.

The protein resides in the cytoplasm. Functionally, required for rescue of stalled ribosomes mediated by trans-translation. Binds to transfer-messenger RNA (tmRNA), required for stable association of tmRNA with ribosomes. tmRNA and SmpB together mimic tRNA shape, replacing the anticodon stem-loop with SmpB. tmRNA is encoded by the ssrA gene; the 2 termini fold to resemble tRNA(Ala) and it encodes a 'tag peptide', a short internal open reading frame. During trans-translation Ala-aminoacylated tmRNA acts like a tRNA, entering the A-site of stalled ribosomes, displacing the stalled mRNA. The ribosome then switches to translate the ORF on the tmRNA; the nascent peptide is terminated with the 'tag peptide' encoded by the tmRNA and targeted for degradation. The ribosome is freed to recommence translation, which seems to be the essential function of trans-translation. The sequence is that of SsrA-binding protein from Salmonella arizonae (strain ATCC BAA-731 / CDC346-86 / RSK2980).